The sequence spans 355 residues: Uroporphyrinogen decarboxylase (355 aa).

Substrate is bound by residues 36–40 (RQAGR), Asp85, Tyr160, Ser215, and His334.

It belongs to the uroporphyrinogen decarboxylase family. As to quaternary structure, homodimer.

It is found in the cytoplasm. It carries out the reaction uroporphyrinogen III + 4 H(+) = coproporphyrinogen III + 4 CO2. The protein operates within porphyrin-containing compound metabolism; protoporphyrin-IX biosynthesis; coproporphyrinogen-III from 5-aminolevulinate: step 4/4. Functionally, catalyzes the decarboxylation of four acetate groups of uroporphyrinogen-III to yield coproporphyrinogen-III. The sequence is that of Uroporphyrinogen decarboxylase from Rhodococcus opacus (strain B4).